The following is a 1148-amino-acid chain: Replication factor C subunit 1 (1148 aa).

A compositionally biased stretch (basic and acidic residues) spans 46–56 (NSSRKEDDFKQ). Disordered regions lie at residues 46–201 (NSSR…LNDE) and 228–380 (TLAM…TNYQ). K50 is covalently cross-linked (Glycyl lysine isopeptide (Lys-Gly) (interchain with G-Cter in SUMO2)). Position 67 is a phosphotyrosine (Y67). S69, S71, S73, and S108 each carry phosphoserine. The residue at position 110 (T110) is a Phosphothreonine. The segment covering 130 to 141 (RSTNSHLGTSNM) has biased composition (polar residues). The residue at position 156 (S156) is a Phosphoserine. Phosphothreonine is present on residues T161 and T163. S164, S173, and S190 each carry phosphoserine. Positions 234 to 246 (EEPKTKKARKDTE) are enriched in basic and acidic residues. S253 bears the Phosphoserine mark. The span at 262–271 (EKHKYPHKVK) shows a compositional bias: basic residues. 2 positions are modified to phosphoserine: S281 and S283. Residues 288-308 (SKYESSKESQQHSKSSADKIG) show a composition bias toward basic and acidic residues. Residue S312 is modified to Phosphoserine. Composition is skewed to basic and acidic residues over residues 323–353 (KRKE…ETKT) and 362–376 (AKKE…EKKR). At S368 the chain carries Phosphoserine. In terms of domain architecture, BRCT spans 402–492 (GAENCLEGLI…PGKKSKYEIA (91 aa)). Basic and acidic residues-rich tracts occupy residues 496 to 507 (EMKKESKLERTP) and 520 to 538 (SKKE…RDSL). The segment at 496–538 (EMKKESKLERTPQKNVQGKRKISPSKKESESKKSRPTSKRDSL) is disordered. A Phosphoserine modification is found at S537. Position 650–657 (650–657 (SGPPGVGK)) interacts with ATP. Residues 1081 to 1148 (KASRHSTSPS…RKGKGKSSKK (68 aa)) form a disordered region. Positions 1094–1105 (EYNEELNEDDSQ) are enriched in acidic residues. Phosphoserine is present on residues S1104 and S1106. The Nuclear localization signal motif lies at 1120–1124 (IKKKT). The segment covering 1130–1140 (SKPEKDKEPRK) has biased composition (basic and acidic residues).

The protein belongs to the activator 1 large subunit family. In terms of assembly, large subunit of the RFC complex, an heteropentameric complex consisting of RFC1 and four small subunits RFC2, RFC3, RFC4 and RFC5; the RFC complex interacts with PCNA and the interaction involves RFC1. As to expression, wide tissue distribution. Undetectable in placental tissue.

The protein localises to the nucleus. Functionally, subunit of the replication factor C (RFC) complex which acts during elongation of primed DNA templates by DNA polymerases delta and epsilon, and is necessary for ATP-dependent loading of proliferating cell nuclear antigen (PCNA) onto primed DNA. This subunit binds to the primer-template junction. Binds the PO-B transcription element as well as other GA rich DNA sequences. Can bind single- or double-stranded DNA. This Homo sapiens (Human) protein is Replication factor C subunit 1 (RFC1).